A 217-amino-acid polypeptide reads, in one-letter code: ATP phosphoribosyltransferase (217 aa).

It belongs to the ATP phosphoribosyltransferase family. Short subfamily. In terms of assembly, heteromultimer composed of HisG and HisZ subunits.

The protein resides in the cytoplasm. It carries out the reaction 1-(5-phospho-beta-D-ribosyl)-ATP + diphosphate = 5-phospho-alpha-D-ribose 1-diphosphate + ATP. The protein operates within amino-acid biosynthesis; L-histidine biosynthesis; L-histidine from 5-phospho-alpha-D-ribose 1-diphosphate: step 1/9. Its function is as follows. Catalyzes the condensation of ATP and 5-phosphoribose 1-diphosphate to form N'-(5'-phosphoribosyl)-ATP (PR-ATP). Has a crucial role in the pathway because the rate of histidine biosynthesis seems to be controlled primarily by regulation of HisG enzymatic activity. This chain is ATP phosphoribosyltransferase (hisG), found in Neisseria meningitidis serogroup A / serotype 4A (strain DSM 15465 / Z2491).